Reading from the N-terminus, the 455-residue chain is Chromosomal replication initiator protein DnaA (455 aa).

Residues 1–75 (MDTNNNIEKE…EILSQNKVGM (75 aa)) are domain I, interacts with DnaA modulators. The interval 75 to 106 (MHLAHSVDVRIEVAPKIQISTQSNINYKATKM) is domain II. Positions 107–321 (SVKDSYTFEN…GAIIKISVNA (215 aa)) are domain III, AAA+ region. 4 residues coordinate ATP: G151, G153, K154, and T155. Positions 322–455 (NLMNASIDLN…DKKTAFNSSE (134 aa)) are domain IV, binds dsDNA.

Belongs to the DnaA family. As to quaternary structure, oligomerizes as a right-handed, spiral filament on DNA at oriC.

Its subcellular location is the cytoplasm. In terms of biological role, plays an essential role in the initiation and regulation of chromosomal replication. ATP-DnaA binds to the origin of replication (oriC) to initiate formation of the DNA replication initiation complex once per cell cycle. Binds the DnaA box (a 9 base pair repeat at the origin) and separates the double-stranded (ds)DNA. Forms a right-handed helical filament on oriC DNA; dsDNA binds to the exterior of the filament while single-stranded (ss)DNA is stabiized in the filament's interior. The ATP-DnaA-oriC complex binds and stabilizes one strand of the AT-rich DNA unwinding element (DUE), permitting loading of DNA polymerase. After initiation quickly degrades to an ADP-DnaA complex that is not apt for DNA replication. Binds acidic phospholipids. This chain is Chromosomal replication initiator protein DnaA, found in Helicobacter pylori (strain HPAG1).